The following is a 582-amino-acid chain: MRNFSVFERFSKAFKDHPSLTRILVVSTISGGGLIAYSEANASYGANGGAVVETGTKKKKVVLLGTGWAGTSFLKNLNNSQYEVQIISPRNYFAFTPLLPSVTCGTVEARSVVEPIRNIGRKNVDTSYLEAECFKIDPASKKVYCRSKQGLSSNGKKEFSVDYDYLVIATGAQSNTFNIPGVEENCHFLKEVEDAQRIRKTVIDSFEKASLPELSDEERKRILHFVVVGGGPTGVEFAAELHDFVTEDLVSLYPRAKGSVRITLLEAADHILTMFDKRITEFAEEKFSRDGIDVKLGSMVTKVNEKDISAKTKGGEVSSIPYGMIVWSTGIGTRPVIKDFMKQIGQGNRRALATDEWLRVEGTDNIYALGDCATINQRKVMEDVSAIFSKADKDKSGTLTLKEFQEAMDDICVRYPQVELYLKSKRMRGIADLLKEAETDDVSKNNIELKIEEFKSALSQVDSQVKFLPATAQVAAQQGAYLAKCFDRMEECEKSPEGPIRMRGEGRHRFRPFRYRHLGQFAPLGGEQTAAQLPGDWVSIGHSSQWLWYSVYASKQVSWRTRVLVVSDWMRRFIFGRDSSSI.

The transit peptide at 1-38 (MRNFSVFERFSKAFKDHPSLTRILVVSTISGGGLIAYS) directs the protein to the mitochondrion. Position 60 to 90 (60 to 90 (KVVLLGTGWAGTSFLKNLNNSQYEVQIISPR)) interacts with FAD. 223–259 (LHFVVVGGGPTGVEFAAELHDFVTEDLVSLYPRAKGS) serves as a coordination point for NAD(+). The EF-hand domain occupies 379 to 414 (KVMEDVSAIFSKADKDKSGTLTLKEFQEAMDDICVR). Ca(2+)-binding residues include Asp392, Asp394, Ser396, Thr398, and Glu403. The Microbody targeting signal motif lies at 573 to 582 (FIFGRDSSSI).

This sequence belongs to the NADH dehydrogenase family. FAD is required as a cofactor. Mostly expressed in seedlings and roots and, to a lower extent, in cotyledons, leaves, stems, buds and flowers.

The protein resides in the mitochondrion inner membrane. It is found in the peroxisome. It carries out the reaction a quinone + NADH + H(+) = a quinol + NAD(+). The enzyme catalyses a ubiquinone + NADH + H(+) = a ubiquinol + NAD(+). Its activity is regulated as follows. NADPH oxidase activity is stimulated by calcium ions. Functionally, alternative NADH-ubiquinone oxidoreductase which catalyzes the oxidation of mitochondrial NADH does not translocate protons across the inner mitochondrial membrane. Calcium-dependent NAD(P)H dehydrogenase; more efficient on NADH. Binds calcium ions. In Arabidopsis thaliana (Mouse-ear cress), this protein is External alternative NAD(P)H-ubiquinone oxidoreductase B2, mitochondrial (NDB2).